The chain runs to 256 residues: Autophagy-related protein 40 (256 aa).

The first 16 residues, 1–16 (MFNLILWPLFLLTSVA), serve as a signal peptide directing secretion. The Lumenal segment spans residues 17–67 (IPLQLTLEVVYLTSSVDFSKASAAKTATSLGQSPVVITIYKSLLKYWSLYE). The helical transmembrane segment at 68-88 (FIHFIYLYTPIDAFLNFLPFT) threads the bilayer. At 89 to 256 (SLLMSFGSIC…DILDETTELD (168 aa)) the chain is on the cytoplasmic side. Positions 197-243 (QPQGDKNRYQNGDRESTKNGAAYQKSSQQSSSFEQNFTSTEFPNDYD) are disordered. The span at 199 to 213 (QGDKNRYQNGDREST) shows a compositional bias: basic and acidic residues. Positions 222–238 (SSQQSSSFEQNFTSTEF) are enriched in low complexity. The ATG8-binding motif lies at 242-245 (YDFM).

As to quaternary structure, interacts with ATG8 and ATG11.

It localises to the endoplasmic reticulum membrane. It is found in the preautophagosomal structure membrane. Acts as a receptor for reticulophagy. Directs autophagic sequestration of folded tubules/sheets derived from the cortical endoplasmic reticulum (cER) and the cytoplasmic endoplasmic reticulum (cytoER) into autophagosomes. Is not required for the cytoplasm-to-vacuole targeting pathway, mitophagy, pexophagy, and non-selective autophagy. The chain is Autophagy-related protein 40 from Saccharomyces cerevisiae (strain ATCC 204508 / S288c) (Baker's yeast).